Consider the following 125-residue polypeptide: Fluoride-specific ion channel FluC (125 aa).

A run of 4 helical transmembrane segments spans residues 4–24 (PLLAVMIGGCAGCVIRWLLAV), 36–56 (GTLLVNLVGGLIIGATVAWFA), 68–88 (LITTGLCGGMTTFSTFSLEVV), and 100–120 (VISVLTHVTGSLLMTIAGFWL). Na(+) contacts are provided by Gly-75 and Thr-78.

The protein belongs to the fluoride channel Fluc/FEX (TC 1.A.43) family.

It localises to the cell inner membrane. It catalyses the reaction fluoride(in) = fluoride(out). With respect to regulation, na(+) is not transported, but it plays an essential structural role and its presence is essential for fluoride channel function. Its function is as follows. Fluoride-specific ion channel. Important for reducing fluoride concentration in the cell, thus reducing its toxicity. In Erwinia tasmaniensis (strain DSM 17950 / CFBP 7177 / CIP 109463 / NCPPB 4357 / Et1/99), this protein is Fluoride-specific ion channel FluC.